Here is a 342-residue protein sequence, read N- to C-terminus: MKIAIDAMGGDYAPREIVKGALLAAEQYRLNIILVGDEEQLRAELGRSNAGGLVNIVHAPEVIEMREHPAVAVRRKKNSSIVKATQLVRDGEASALVSAGSTGAAMAAALFGLGRIKGIDRPAIAGVLPNEKGLTVLLDAGANVDCKPYHLLQFGVMGYLYAKKIFGITCPRVGLLSNGEEETKGNEVTLAAYHLLQKAGINFVGNIEGRDLFNGNVDVAVCDGFVGNVVLKAGEGLAGALFKIMKEEISKSWLAKIGTVMAEPALKGFKSRLDYAEYGGAPLLGVNGISIICHGSSTAKAVKNAIRVARESVENRLLEDIRSSIESIEVKGAGGNLVQEID.

It belongs to the PlsX family. In terms of assembly, homodimer. Probably interacts with PlsY.

Its subcellular location is the cytoplasm. The enzyme catalyses a fatty acyl-[ACP] + phosphate = an acyl phosphate + holo-[ACP]. It participates in lipid metabolism; phospholipid metabolism. Its function is as follows. Catalyzes the reversible formation of acyl-phosphate (acyl-PO(4)) from acyl-[acyl-carrier-protein] (acyl-ACP). This enzyme utilizes acyl-ACP as fatty acyl donor, but not acyl-CoA. The chain is Phosphate acyltransferase from Pelotomaculum thermopropionicum (strain DSM 13744 / JCM 10971 / SI).